A 414-amino-acid chain; its full sequence is Glucose-1-phosphate adenylyltransferase (414 aa).

Alpha-D-glucose 1-phosphate-binding positions include Tyr103, Gly168, 183–184, and Ser201; that span reads EK.

Belongs to the bacterial/plant glucose-1-phosphate adenylyltransferase family. As to quaternary structure, homotetramer.

It catalyses the reaction alpha-D-glucose 1-phosphate + ATP + H(+) = ADP-alpha-D-glucose + diphosphate. It functions in the pathway glycan biosynthesis; glycogen biosynthesis. In terms of biological role, involved in the biosynthesis of ADP-glucose, a building block required for the elongation reactions to produce glycogen. Catalyzes the reaction between ATP and alpha-D-glucose 1-phosphate (G1P) to produce pyrophosphate and ADP-Glc. This chain is Glucose-1-phosphate adenylyltransferase, found in Thermus thermophilus (strain ATCC 27634 / DSM 579 / HB8).